Here is a 490-residue protein sequence, read N- to C-terminus: Aspartyl/glutamyl-tRNA(Asn/Gln) amidotransferase subunit B (490 aa).

It belongs to the GatB/GatE family. GatB subfamily. As to quaternary structure, heterotrimer of A, B and C subunits.

It carries out the reaction L-glutamyl-tRNA(Gln) + L-glutamine + ATP + H2O = L-glutaminyl-tRNA(Gln) + L-glutamate + ADP + phosphate + H(+). The catalysed reaction is L-aspartyl-tRNA(Asn) + L-glutamine + ATP + H2O = L-asparaginyl-tRNA(Asn) + L-glutamate + ADP + phosphate + 2 H(+). Its function is as follows. Allows the formation of correctly charged Asn-tRNA(Asn) or Gln-tRNA(Gln) through the transamidation of misacylated Asp-tRNA(Asn) or Glu-tRNA(Gln) in organisms which lack either or both of asparaginyl-tRNA or glutaminyl-tRNA synthetases. The reaction takes place in the presence of glutamine and ATP through an activated phospho-Asp-tRNA(Asn) or phospho-Glu-tRNA(Gln). This chain is Aspartyl/glutamyl-tRNA(Asn/Gln) amidotransferase subunit B, found in Burkholderia mallei (strain NCTC 10247).